The chain runs to 637 residues: Extracellular metalloproteinase 10 (637 aa).

The first 19 residues, 1–19 (MHGLLLAATLLSLPFNAVA), serve as a signal peptide directing secretion. Residues 20-245 (HVPPTTGLVR…VHNVVDYVAH (226 aa)) constitute a propeptide that is removed on maturation. N-linked (GlcNAc...) asparagine glycosylation is present at Asn-282. Zn(2+) is bound at residue His-429. Residue Glu-430 is part of the active site. Residue His-433 coordinates Zn(2+). An N-linked (GlcNAc...) asparagine glycan is attached at Asn-502.

It belongs to the peptidase M36 family. Zn(2+) is required as a cofactor.

Its subcellular location is the secreted. Its function is as follows. Secreted metalloproteinase that allows assimilation of proteinaceous substrates. In Uncinocarpus reesii (strain UAMH 1704), this protein is Extracellular metalloproteinase 10 (MEP10).